The sequence spans 128 residues: Small ribosomal subunit protein uS9c (128 aa).

Residues 106–128 (SRIKERKKYGLKKARKAPQFSKR) are disordered. Residues 109-128 (KERKKYGLKKARKAPQFSKR) are compositionally biased toward basic residues.

This sequence belongs to the universal ribosomal protein uS9 family.

Its subcellular location is the plastid. The protein resides in the chloroplast. The protein is Small ribosomal subunit protein uS9c (rps9) of Cyanidium caldarium (Red alga).